The following is a 166-amino-acid chain: Putative 4-hydroxy-4-methyl-2-oxoglutarate aldolase 3 (166 aa).

Alanine 2 carries the N-acetylalanine modification. Substrate-binding positions include 81-84 and arginine 103; that span reads GGNL. Aspartate 104 lines the a divalent metal cation pocket.

It belongs to the class II aldolase/RraA-like family. In terms of assembly, homotrimer. A divalent metal cation is required as a cofactor.

The enzyme catalyses 4-hydroxy-4-methyl-2-oxoglutarate = 2 pyruvate. The catalysed reaction is oxaloacetate + H(+) = pyruvate + CO2. Catalyzes the aldol cleavage of 4-hydroxy-4-methyl-2-oxoglutarate (HMG) into 2 molecules of pyruvate. Also contains a secondary oxaloacetate (OAA) decarboxylase activity due to the common pyruvate enolate transition state formed following C-C bond cleavage in the retro-aldol and decarboxylation reactions. In Arabidopsis thaliana (Mouse-ear cress), this protein is Putative 4-hydroxy-4-methyl-2-oxoglutarate aldolase 3.